The primary structure comprises 77 residues: DNA-directed RNA polymerase subunit epsilon (77 aa).

It belongs to the RNA polymerase subunit epsilon family. In terms of assembly, RNAP is composed of a core of 2 alpha, a beta and a beta' subunit. The core is associated with a delta subunit, and at least one of epsilon or omega. When a sigma factor is associated with the core the holoenzyme is formed, which can initiate transcription.

The enzyme catalyses RNA(n) + a ribonucleoside 5'-triphosphate = RNA(n+1) + diphosphate. Its function is as follows. A non-essential component of RNA polymerase (RNAP). This is DNA-directed RNA polymerase subunit epsilon from Streptococcus pneumoniae serotype 2 (strain D39 / NCTC 7466).